The sequence spans 182 residues: Adenine phosphoribosyltransferase (182 aa).

This sequence belongs to the purine/pyrimidine phosphoribosyltransferase family. As to quaternary structure, homodimer.

The protein localises to the cytoplasm. The catalysed reaction is AMP + diphosphate = 5-phospho-alpha-D-ribose 1-diphosphate + adenine. It participates in purine metabolism; AMP biosynthesis via salvage pathway; AMP from adenine: step 1/1. In terms of biological role, catalyzes a salvage reaction resulting in the formation of AMP, that is energically less costly than de novo synthesis. This is Adenine phosphoribosyltransferase from Bordetella pertussis (strain Tohama I / ATCC BAA-589 / NCTC 13251).